The sequence spans 238 residues: Ribonuclease PH (238 aa).

Residues Arg86 and 124-126 each bind phosphate; that span reads GTR.

It belongs to the RNase PH family. Homohexameric ring arranged as a trimer of dimers.

The enzyme catalyses tRNA(n+1) + phosphate = tRNA(n) + a ribonucleoside 5'-diphosphate. Its function is as follows. Phosphorolytic 3'-5' exoribonuclease that plays an important role in tRNA 3'-end maturation. Removes nucleotide residues following the 3'-CCA terminus of tRNAs; can also add nucleotides to the ends of RNA molecules by using nucleoside diphosphates as substrates, but this may not be physiologically important. Probably plays a role in initiation of 16S rRNA degradation (leading to ribosome degradation) during starvation. In Shigella dysenteriae serotype 1 (strain Sd197), this protein is Ribonuclease PH.